Here is a 232-residue protein sequence, read N- to C-terminus: 5'-methylthioadenosine/S-adenosylhomocysteine nucleosidase (232 aa).

Residue Glu-12 is the Proton acceptor of the active site. Substrate contacts are provided by residues Gly-78, Ile-152, and 173–174 (ME). Asp-197 (proton donor) is an active-site residue.

It belongs to the PNP/UDP phosphorylase family. MtnN subfamily. As to quaternary structure, homodimer.

The enzyme catalyses S-adenosyl-L-homocysteine + H2O = S-(5-deoxy-D-ribos-5-yl)-L-homocysteine + adenine. It carries out the reaction S-methyl-5'-thioadenosine + H2O = 5-(methylsulfanyl)-D-ribose + adenine. It catalyses the reaction 5'-deoxyadenosine + H2O = 5-deoxy-D-ribose + adenine. Its pathway is amino-acid biosynthesis; L-methionine biosynthesis via salvage pathway; S-methyl-5-thio-alpha-D-ribose 1-phosphate from S-methyl-5'-thioadenosine (hydrolase route): step 1/2. Catalyzes the irreversible cleavage of the glycosidic bond in both 5'-methylthioadenosine (MTA) and S-adenosylhomocysteine (SAH/AdoHcy) to adenine and the corresponding thioribose, 5'-methylthioribose and S-ribosylhomocysteine, respectively. Also cleaves 5'-deoxyadenosine, a toxic by-product of radical S-adenosylmethionine (SAM) enzymes, into 5-deoxyribose and adenine. Thus, is required for in vivo function of the radical SAM enzymes biotin synthase and lipoic acid synthase, that are inhibited by 5'-deoxyadenosine accumulation. In Escherichia fergusonii (strain ATCC 35469 / DSM 13698 / CCUG 18766 / IAM 14443 / JCM 21226 / LMG 7866 / NBRC 102419 / NCTC 12128 / CDC 0568-73), this protein is 5'-methylthioadenosine/S-adenosylhomocysteine nucleosidase.